Here is a 137-residue protein sequence, read N- to C-terminus: Protein cornichon homolog 3 (137 aa).

Transmembrane regions (helical) follow at residues 8–28 (IISFLILITLLGLIVYQLISL), 54–74 (ILQGFLCVFYLVTGHWFMALL), and 113–133 (LAYIILTLFLTIFWLIYSTLD).

It belongs to the cornichon family.

Its subcellular location is the membrane. This is Protein cornichon homolog 3 from Arabidopsis thaliana (Mouse-ear cress).